Consider the following 206-residue polypeptide: Fibroblast growth factor 4 (206 aa).

Positions 1–30 (MSGPGTAAVALLPAVLLALLAPWAGRGGAA) are cleaved as a signal peptide.

The protein belongs to the heparin-binding growth factors family. Interacts with FGFR1, FGFR2, FGFR3 and FGFR4. Affinity between fibroblast growth factors (FGFs) and their receptors is increased by heparan sulfate glycosaminoglycans that function as coreceptors.

The protein resides in the secreted. Functionally, plays an important role in the regulation of embryonic development, cell proliferation, and cell differentiation. Required for normal limb and cardiac valve development during embryogenesis. May play a role in embryonic molar tooth bud development via inducing the expression of MSX1, MSX2 and MSX1-mediated expression of SDC1 in dental mesenchyme cells. This chain is Fibroblast growth factor 4, found in Homo sapiens (Human).